A 2320-amino-acid polypeptide reads, in one-letter code: Sperm-associated antigen 17 (2320 aa).

Basic and acidic residues-rich tracts occupy residues 139-171 (DQQR…EKKV) and 199-210 (RRGEDDEAKSYI). 11 disordered regions span residues 139-211 (DQQR…SYID), 388-407 (IPEP…KAQY), 682-739 (AEQD…SMDQ), 894-928 (SASK…EKDK), 950-1001 (EERL…AKTL), 1084-1118 (KEKE…EKVK), 1191-1221 (QGKG…EKKN), 1334-1367 (SSPD…KSET), 1393-1416 (DIIP…TTTP), 1983-2028 (KEAS…YENV), and 2080-2101 (TKES…EEPD). Polar residues predominate over residues 703 to 720 (VTGSTSNSTKPWNSSNRQ). A coiled-coil region spans residues 865–965 (EEAKYQEAKM…EKKAEKKGKD (101 aa)). 2 stretches are compositionally biased toward basic and acidic residues: residues 914-928 (ELSD…EKDK) and 950-999 (EERL…EPAK). A compositionally biased stretch (acidic residues) spans 1090–1103 (NSEEEEEEEEEKEE). Basic and acidic residues-rich tracts occupy residues 1104 to 1118 (VEEK…EKVK) and 1203 to 1221 (KHKD…EKKN). 2 stretches are compositionally biased toward polar residues: residues 2012 to 2028 (VNKS…YENV) and 2082 to 2094 (ESVS…NVTR).

Interacts (via the C-terminus) with SPAG6; the interaction probably occurs on polymerized microtubules. As to expression, highly expressed in testis, round spermatids, testicular sperm, epididymal sperm and in condensing spermatids (at protein level). Expressed in organs that contain cilia-bearing cells including brain, oviduct, lung, and uterus. Expressed in articular cartilage and bone.

Its subcellular location is the cytoplasm. The protein localises to the cytoskeleton. It is found in the flagellum axoneme. The protein resides in the cytoplasmic vesicle. It localises to the secretory vesicle. Its subcellular location is the acrosome. The protein localises to the golgi apparatus. Component of the central pair apparatus of ciliary axonemes. Plays a critical role in the function and structure of motile cilia. May play a role in endochondral bone formation, most likely because of a function in primary cilia of chondrocytes and osteoblasts. Essential for normal spermatogenesis and male fertility. Required for normal manchette structure, transport of proteins along the manchette microtubules and formation of the sperm head and flagellum. Essential for sperm flagellum development and proper assembly of the respiratory motile cilia central pair apparatus, but not the brain ependymal cilia. The protein is Sperm-associated antigen 17 (Spag17) of Mus musculus (Mouse).